The sequence spans 330 residues: Aspartate--ammonia ligase (330 aa).

Belongs to the class-II aminoacyl-tRNA synthetase family. AsnA subfamily.

The protein localises to the cytoplasm. It carries out the reaction L-aspartate + NH4(+) + ATP = L-asparagine + AMP + diphosphate + H(+). Its pathway is amino-acid biosynthesis; L-asparagine biosynthesis; L-asparagine from L-aspartate (ammonia route): step 1/1. The protein is Aspartate--ammonia ligase of Mannheimia succiniciproducens (strain KCTC 0769BP / MBEL55E).